Reading from the N-terminus, the 209-residue chain is Translation initiation factor IF-3 (209 aa).

This sequence belongs to the IF-3 family. As to quaternary structure, monomer.

It localises to the cytoplasm. In terms of biological role, IF-3 binds to the 30S ribosomal subunit and shifts the equilibrium between 70S ribosomes and their 50S and 30S subunits in favor of the free subunits, thus enhancing the availability of 30S subunits on which protein synthesis initiation begins. The polypeptide is Translation initiation factor IF-3 (Chlorobium phaeobacteroides (strain DSM 266 / SMG 266 / 2430)).